We begin with the raw amino-acid sequence, 121 residues long: Large ribosomal subunit protein bL19 (121 aa).

It belongs to the bacterial ribosomal protein bL19 family.

Functionally, this protein is located at the 30S-50S ribosomal subunit interface and may play a role in the structure and function of the aminoacyl-tRNA binding site. The polypeptide is Large ribosomal subunit protein bL19 (Mesomycoplasma hyopneumoniae (strain 7448) (Mycoplasma hyopneumoniae)).